A 467-amino-acid polypeptide reads, in one-letter code: Glutamate--tRNA ligase (467 aa).

The short motif at 15–25 (PSPTGYLHVGG) is the 'HIGH' region element. The 'KMSKS' region motif lies at 249–253 (KLSKR). Lys252 provides a ligand contact to ATP.

It belongs to the class-I aminoacyl-tRNA synthetase family. Glutamate--tRNA ligase type 1 subfamily. Monomer.

It localises to the cytoplasm. The catalysed reaction is tRNA(Glu) + L-glutamate + ATP = L-glutamyl-tRNA(Glu) + AMP + diphosphate. In terms of biological role, catalyzes the attachment of glutamate to tRNA(Glu) in a two-step reaction: glutamate is first activated by ATP to form Glu-AMP and then transferred to the acceptor end of tRNA(Glu). This is Glutamate--tRNA ligase from Coprothermobacter proteolyticus (strain ATCC 35245 / DSM 5265 / OCM 4 / BT).